Consider the following 307-residue polypeptide: MSYTVVALGGNALLRGGEGSIQDQRDTIEQTVPHFVDLYERGHELVFTHGNGPQVGQLLLQNEEAESAAEKPLDVLGAESQAQIGYLLQQQLREELGETPATVITQTIVDEDDPAFDDPTKRIGPFYDEDEASEKDFPVKEGTDGDGNVGYRRVVPSPKPVDIVEAEHIKTLVETGKPVISSGGGGVPVVEDGDSLTGVAAVIDKDRAAQSLATDIGADEFLVLTDVDAVYRNFGTEDEEELSELTTEEAADMLAAGEFGEGSMAPKVEACIEFVESGGDRAIITKPETATEALDGAAGTTVVPADE.

Belongs to the carbamate kinase family.

The protein resides in the cytoplasm. It catalyses the reaction hydrogencarbonate + NH4(+) + ATP = carbamoyl phosphate + ADP + H2O + H(+). The protein operates within metabolic intermediate metabolism; carbamoyl phosphate degradation; CO(2) and NH(3) from carbamoyl phosphate: step 1/1. In terms of biological role, carbamate kinase involved in the arginine deiminase pathway of fermentative arginine utilization. This Halobacterium salinarum (strain ATCC 700922 / JCM 11081 / NRC-1) (Halobacterium halobium) protein is Carbamate kinase (arcC).